Here is a 416-residue protein sequence, read N- to C-terminus: Choline/ethanolaminephosphotransferase 1 (416 aa).

A disordered region spans residues M1–V20. Position 18 is a phosphoserine (S18). T40 is subject to Phosphothreonine. CDP-choline is bound at residue N86. 2 consecutive transmembrane segments (helical) span residues T89–P108 and L116–D133. D133 lines the Mg(2+) pocket. N144 is a glycosylation site (N-linked (GlcNAc...) asparagine). E151 contacts CDP-choline. D154 contacts Mg(2+). The Proton acceptor role is filled by H155. The next 8 helical transmembrane spans lie at G156–G176, D180–Q199, I210–G230, M246–R267, V286–K306, H315–L334, T349–F363, and D368–C388. Residue D158 participates in Mg(2+) binding.

This sequence belongs to the CDP-alcohol phosphatidyltransferase class-I family. Homodimer. The cofactor is Mg(2+). Mn(2+) serves as cofactor.

The protein localises to the endoplasmic reticulum membrane. The protein resides in the nucleus membrane. The enzyme catalyses CDP-ethanolamine + a 1,2-diacyl-sn-glycerol = a 1,2-diacyl-sn-glycero-3-phosphoethanolamine + CMP + H(+). It catalyses the reaction CDP-choline + a 1,2-diacyl-sn-glycerol = a 1,2-diacyl-sn-glycero-3-phosphocholine + CMP + H(+). The catalysed reaction is 1-O-alkyl-2-acyl-sn-glycerol + CDP-choline = a 1-O-alkyl-2-acyl-sn-glycero-3-phosphocholine + CMP + H(+). It carries out the reaction a 1-O-(1Z-alkenyl)-2-acyl-sn-glycerol + CDP-choline = a 1-O-(1Z-alkenyl)-2-acyl-sn-glycero-3-phosphocholine + CMP + H(+). The enzyme catalyses 1,2-dioctanoyl-sn-glycerol + CDP-choline = 1,2-dioctanoyl-sn-glycero-3-phosphocholine + CMP + H(+). It catalyses the reaction 1,2-didecanoyl-sn-glycerol + CDP-choline = 1,2-didecanoyl-sn-glycero-3-phosphocholine + CMP + H(+). The catalysed reaction is CDP-choline + 1,2-di-(9Z-octadecenoyl)-sn-glycerol = 1,2-di-(9Z-octadecenoyl)-sn-glycero-3-phosphocholine + CMP + H(+). It carries out the reaction 1-hexadecanoyl-2-(9Z-octadecenoyl)-sn-glycerol + CDP-choline = 1-hexadecanoyl-2-(9Z-octadecenoyl)-sn-glycero-3-phosphocholine + CMP + H(+). The enzyme catalyses CDP-ethanolamine + 1,2-di-(9Z-octadecenoyl)-sn-glycerol = 1,2-di-(9Z-octadecenoyl)-sn-glycero-3-phosphoethanolamine + CMP + H(+). It catalyses the reaction 1-hexadecanoyl-2-(9Z-octadecenoyl)-sn-glycerol + CDP-ethanolamine = 1-hexadecanoyl-2-(9Z-octadecenoyl)-sn-glycero-3-phosphoethanolamine + CMP + H(+). The catalysed reaction is 1-hexadecanoyl-2-(4Z,7Z,10Z,13Z,16Z,19Z-docosahexaenoyl)-sn-glycerol + CDP-choline = 1-hexadecanoyl-2-(4Z,7Z,10Z,13Z,16Z,19Z-docosahexaenoyl)-sn-glycero-3-phosphocholine + CMP + H(+). It carries out the reaction 1,2-di-(9Z-hexadecenoyl)-sn-glycerol + CDP-choline = 1,2-di-(9Z-hexadecenoyl)-sn-glycero-3-phosphocholine + CMP + H(+). The enzyme catalyses 1,2-di-(9Z-hexadecenoyl)-sn-glycerol + CDP-ethanolamine = 1,2-di-(9Z-hexadecenoyl)-sn-glycero-3-phosphoethanolamine + CMP + H(+). It catalyses the reaction 1-O-hexadecyl-2-acetyl-sn-glycerol + CDP-choline = 1-O-hexadecyl-2-acetyl-sn-glycero-3-phosphocholine + CMP + H(+). The catalysed reaction is 1-O-hexadecyl-2-(5Z,8Z,11Z,14Z-eicosatetraenoyl)-sn-glycerol + CDP-choline = 1-O-hexadecyl-2-(5Z,8Z,11Z,14Z)-eicosatetraenoyl-sn-glycero-3-phosphocholine + CMP + H(+). Its pathway is phospholipid metabolism; phosphatidylethanolamine biosynthesis; phosphatidylethanolamine from ethanolamine: step 3/3. It participates in phospholipid metabolism; phosphatidylcholine biosynthesis; phosphatidylcholine from phosphocholine: step 2/2. In terms of biological role, catalyzes both phosphatidylcholine and phosphatidylethanolamine biosynthesis from CDP-choline and CDP-ethanolamine, respectively. Involved in protein-dependent process of phospholipid transport to distribute phosphatidyl choline to the lumenal surface. Has a higher cholinephosphotransferase activity than ethanolaminephosphotransferase activity. The chain is Choline/ethanolaminephosphotransferase 1 from Rattus norvegicus (Rat).